The following is a 348-amino-acid chain: Sulfate/thiosulfate import ATP-binding protein CysA (348 aa).

Positions 3–237 constitute an ABC transporter domain; sequence IRIQELRKQF…PSSPFVYSFV (235 aa). 35-42 is an ATP binding site; that stretch reads GPSGSGKT.

It belongs to the ABC transporter superfamily. Sulfate/tungstate importer (TC 3.A.1.6) family. As to quaternary structure, the complex is composed of two ATP-binding proteins (CysA), two transmembrane proteins (CysT and CysW) and a solute-binding protein (CysP).

Its subcellular location is the cell inner membrane. The enzyme catalyses sulfate(out) + ATP + H2O = sulfate(in) + ADP + phosphate + H(+). The catalysed reaction is thiosulfate(out) + ATP + H2O = thiosulfate(in) + ADP + phosphate + H(+). Its function is as follows. Part of the ABC transporter complex CysAWTP involved in sulfate/thiosulfate import. Responsible for energy coupling to the transport system. The protein is Sulfate/thiosulfate import ATP-binding protein CysA of Xylella fastidiosa (strain Temecula1 / ATCC 700964).